Here is a 517-residue protein sequence, read N- to C-terminus: 2,3-bisphosphoglycerate-independent phosphoglycerate mutase (517 aa).

Mn(2+) contacts are provided by D14 and S64. S64 serves as the catalytic Phosphoserine intermediate. Substrate contacts are provided by residues H125, 155–156, R187, R193, 259–262, and K334; these read RD and RPDR. Mn(2+)-binding residues include D401, H405, D442, H443, and H461.

The protein belongs to the BPG-independent phosphoglycerate mutase family. In terms of assembly, monomer. The cofactor is Mn(2+).

It catalyses the reaction (2R)-2-phosphoglycerate = (2R)-3-phosphoglycerate. Its pathway is carbohydrate degradation; glycolysis; pyruvate from D-glyceraldehyde 3-phosphate: step 3/5. Functionally, catalyzes the interconversion of 2-phosphoglycerate and 3-phosphoglycerate. The protein is 2,3-bisphosphoglycerate-independent phosphoglycerate mutase of Symbiobacterium thermophilum (strain DSM 24528 / JCM 14929 / IAM 14863 / T).